Reading from the N-terminus, the 415-residue chain is Casein kinase I isoform delta (415 aa).

The Protein kinase domain maps to 9–277 (YRLGRKIGSG…YLRQLFRNLF (269 aa)). ATP is bound by residues 15-23 (IGSGSFGDI) and lysine 38. Residue aspartate 128 is the Proton acceptor of the active site. Residues 301-315 (AEDAERERREREERL) show a composition bias toward basic and acidic residues. Positions 301–415 (AEDAERERRE…SSGLPSTVHR (115 aa)) are disordered. An autoinhibitory region spans residues 317 to 342 (HTRNPAVRGLPSTASGRLRGTQEVTP). Residues 341 to 352 (TPSTPLTPTSHT) are compositionally biased toward low complexity. Residues 380–415 (NVSSSDLTSRQDTSRMSTSQIPSRVTSSGLPSTVHR) show a composition bias toward polar residues.

This sequence belongs to the protein kinase superfamily. As to quaternary structure, monomer. Interacts with per1 and per2. Component of the circadian core oscillator. In terms of processing, autophosphorylated on serine and threonine residues. As to expression, detected in retina photoreceptor cells.

It localises to the cytoplasm. It is found in the nucleus. It carries out the reaction L-seryl-[protein] + ATP = O-phospho-L-seryl-[protein] + ADP + H(+). It catalyses the reaction L-threonyl-[protein] + ATP = O-phospho-L-threonyl-[protein] + ADP + H(+). The enzyme catalyses L-seryl-[tau protein] + ATP = O-phospho-L-seryl-[tau protein] + ADP + H(+). The catalysed reaction is L-threonyl-[tau protein] + ATP = O-phospho-L-threonyl-[tau protein] + ADP + H(+). With respect to regulation, exhibits substrate-dependent heparin activation. Functionally, casein kinases are operationally defined by their preferential utilization of acidic proteins such as caseins as substrates. Can phosphorylate a large number of proteins. Central component of the circadian clock. May act as a negative regulator of circadian rhythmicity by phosphorylating per1 and per2, which may lead to their degradation. Participates in wnt signaling. Its function is as follows. Has no kinase activity. The protein is Casein kinase I isoform delta (csnk1d) of Xenopus laevis (African clawed frog).